Consider the following 147-residue polypeptide: RxLR effector protein Avr3a (147 aa).

The N-terminal stretch at 1–21 (MRLAIMLSATAVAINFATSSA) is a signal peptide. Residues 44-59 (RLLRKNEENEETSEER) carry the RxLR-dEER motif. The residue at position 48 (lysine 48) is an N6-acetyllysine. Positions 77–147 (ALTERADAKK…YMMHLGLTGY (71 aa)) are effector domain.

Belongs to the RxLR effector family. In terms of assembly, forms homodimers via the RxLR-dEER motif. Interacts with host E3 ligase CMPG1. Interacts with host DRP2. Post-translationally, proteolytically cleaved. The cleavage site directly after the RxLR sequence and the high conservation among other effector proteins suggest that the RxLR motif might play a crucial role in the intracellular processing before secretion. In terms of processing, glycosylated. N-acetylated at Lys-48 after cleavage.

It localises to the secreted. It is found in the host cytoplasm. Multifunctional effector that can suppress host BAK1/SERK3-mediated immunity through at least two different pathways. Manipulates plant immunity by targeting and stabilizing host E3 ligase CMPG1. Preventing the normal 26S proteasome-dependent degradation of potato CMPG1, and thus potentially of its protein substrates in the host cell, further abolishes host cell death during the biotrophic phase of infection. Also associates with and affects the function of the dynamin-related protein 2 (DRP2), a plant GTPase involved in immune receptor-mediated endocytosis. The Avr3a(EM) form evades recognition by R3a, thus does not trigger R3a-mediated hypersensitivity and does not suppress INF1-induced cell death. This is RxLR effector protein Avr3a from Phytophthora infestans (Potato late blight agent).